The sequence spans 354 residues: Ion-translocating oxidoreductase complex subunit D (354 aa).

3 helical membrane-spanning segments follow: residues 9–28, 67–87, and 117–137; these read IMLHVCLALLPTTAWGLYLF, LLSGWLLALTLPPWAPWWIAV, and VALLIAFPLQMTTWALPLPLG. Thr165 is subject to FMN phosphoryl threonine. 5 helical membrane-spanning segments follow: residues 200-220, 222-242, 249-269, 277-297, and 301-321; these read GSLGETSELLILLGGLWLLAL, IIHWEIPLGMLLTVGALAALA, VHGGGLFHLTSGGLLLGALFI, PISRSGRLIFAIGCGALVFVI, and GNFPEAVAFAVLLMNALVPLI.

Belongs to the NqrB/RnfD family. As to quaternary structure, the complex is composed of six subunits: RnfA, RnfB, RnfC, RnfD, RnfE and RnfG. FMN serves as cofactor.

It localises to the cell inner membrane. In terms of biological role, part of a membrane-bound complex that couples electron transfer with translocation of ions across the membrane. This Stutzerimonas stutzeri (Pseudomonas stutzeri) protein is Ion-translocating oxidoreductase complex subunit D.